Reading from the N-terminus, the 597-residue chain is MDHIRNFSIIAHIDHGKSTLADRIIQLCGGLSDREMESQVLDSMDLERERGITIKAQTAALTYRARDGKVYNLNLIDTPGHVDFSYEVSRSLSACEGALLVVDASQGVEAQTVANCYTAIELGVEVVPVLNKIDLPAANPENAIAEIEDVIGIDAMDAVRCSAKTGLGVEDVLESLIAKVPPPKGDPDAPLQALIIDSWFDNYVGVVMLVRIVNGTLRPKERIKLMATDAQYAVEHVGVFTPKSRNLESLSAGQVGFIISGIKELTAAKVGDTVTHATKPAPEPLPGFKEVKPQVFAGLYPVEANQYDALRESLEKLKLNDASLQYEPEVSQALGFGFRCGFLGLLHMEIVQERLEREFDMDLITTAPTVVYEVVQSDGTTIMVENPAKMPEPARIAEIREPIVTVNLYMPQDYVGSVITLCEQKRGTQINMQYHGRQVQLTYEIPMAEIVLDFFDRLKSVSRGYASMDYEFKEYRTSDVVKVDMLINGDKVDALSIIVHRSQSQYRGREVAAKMREIIPRQMYDVAIQAAIGAHIIARENIKALRKNVLAKCYGGDITRKKKLLEKQKEGKKRMKQVGSVEIPQEAFLAILRVEDK.

The tr-type G domain maps to 2–184 (DHIRNFSIIA…SLIAKVPPPK (183 aa)). GTP is bound by residues 14-19 (DHGKST) and 131-134 (NKID).

This sequence belongs to the TRAFAC class translation factor GTPase superfamily. Classic translation factor GTPase family. LepA subfamily.

The protein localises to the cell inner membrane. The enzyme catalyses GTP + H2O = GDP + phosphate + H(+). Required for accurate and efficient protein synthesis under certain stress conditions. May act as a fidelity factor of the translation reaction, by catalyzing a one-codon backward translocation of tRNAs on improperly translocated ribosomes. Back-translocation proceeds from a post-translocation (POST) complex to a pre-translocation (PRE) complex, thus giving elongation factor G a second chance to translocate the tRNAs correctly. Binds to ribosomes in a GTP-dependent manner. The polypeptide is Elongation factor 4 (Burkholderia pseudomallei (strain 1710b)).